The sequence spans 519 residues: Methionine--tRNA ligase (519 aa).

Residues 11-21 carry the 'HIGH' region motif; the sequence is AYPNAAPHVGH. The 'KMSKS' region signature appears at 299–303; it reads KMSKS. Lys-302 provides a ligand contact to ATP. Residues 500 to 519 form a disordered region; that stretch reads LPPPTGVFPRYQPPQPPEGK.

It belongs to the class-I aminoacyl-tRNA synthetase family. MetG type 2B subfamily. In terms of assembly, monomer.

It localises to the cytoplasm. It catalyses the reaction tRNA(Met) + L-methionine + ATP = L-methionyl-tRNA(Met) + AMP + diphosphate. Its function is as follows. Is required not only for elongation of protein synthesis but also for the initiation of all mRNA translation through initiator tRNA(fMet) aminoacylation. The sequence is that of Methionine--tRNA ligase from Mycobacterium tuberculosis (strain ATCC 25618 / H37Rv).